The sequence spans 65 residues: Large ribosomal subunit protein bL35 (65 aa).

This sequence belongs to the bacterial ribosomal protein bL35 family.

The chain is Large ribosomal subunit protein bL35 from Borrelia turicatae (strain 91E135).